The primary structure comprises 257 residues: Type III pantothenate kinase (257 aa).

6–13 (DSGNTNTV) lines the ATP pocket. A substrate-binding site is contributed by 108–111 (GADR). Asp-110 serves as the catalytic Proton acceptor. Residue Asp-130 coordinates K(+). Thr-133 serves as a coordination point for ATP. Position 185 (Thr-185) interacts with substrate.

It belongs to the type III pantothenate kinase family. Homodimer. The cofactor is NH4(+). It depends on K(+) as a cofactor.

It is found in the cytoplasm. The catalysed reaction is (R)-pantothenate + ATP = (R)-4'-phosphopantothenate + ADP + H(+). It functions in the pathway cofactor biosynthesis; coenzyme A biosynthesis; CoA from (R)-pantothenate: step 1/5. Catalyzes the phosphorylation of pantothenate (Pan), the first step in CoA biosynthesis. This Rhodospirillum rubrum (strain ATCC 11170 / ATH 1.1.1 / DSM 467 / LMG 4362 / NCIMB 8255 / S1) protein is Type III pantothenate kinase.